The following is a 188-amino-acid chain: MESRFTRGKSPLLERPLGRPRGEVSLSAFALLFCELVQYCQRRVYSVAELQSKLAQLGHQVGLRLLDPLVSRERGGRRETKVLSVLLFVKGPVWRALFGKEADKLEQANDDDKTYYVIEREPLVNTFISVPRENSTLNCAAFTAGLVEAVLGASGFPAKVTAHWHKGTTLMIKFEEGVIARDKSLEGR.

This sequence belongs to the TRAPP small subunits family. BET3 subfamily. Part of the multisubunit TRAPP (transport protein particle) complex.

It is found in the golgi apparatus. Its subcellular location is the cis-Golgi network. The protein resides in the endoplasmic reticulum. In terms of biological role, may play a role in vesicular transport from endoplasmic reticulum to Golgi. The sequence is that of Trafficking protein particle complex subunit 5 (TRAPPC5) from Gallus gallus (Chicken).